Reading from the N-terminus, the 590-residue chain is G protein-coupled receptor kinase 5 (590 aa).

An N-terminal region spans residues 1–185 (MELENIVANT…LERQPVTKNT (185 aa)). The interaction with calmodulin stretch occupies residues 20-39 (GGKRKGKSKKWKEILKFPHI). An RGS domain is found at 53–171 (YCSLCDKQPV…LDSMYFDRFL (119 aa)). The Protein kinase domain maps to 186 to 448 (FRQYRVLGKG…AAEVKRHPFF (263 aa)). ATP is bound by residues 192 to 200 (LGKGGFGEV) and Lys215. Residue Asp311 is the Proton acceptor of the active site. The Nuclear localization signal motif lies at 388–395 (RKEKVKRE). The 66-residue stretch at 449–514 (RNMNFKRLEA…GSVPIPWQSE (66 aa)) folds into the AGC-kinase C-terminal domain. Phosphoserine; by autocatalysis is present on Ser484. Thr485 carries the phosphothreonine; by autocatalysis modification. The sufficient for membrane localization stretch occupies residues 546 to 565 (PKKGLLQRLFKRQHQNNSKS). Positions 554 to 590 (LFKRQHQNNSKSSPNSKTSFNHHINSNHVSSNSTGSS) are disordered. Over residues 561-590 (NNSKSSPNSKTSFNHHINSNHVSSNSTGSS) the composition is skewed to low complexity. A Phosphoserine modification is found at Ser579.

The protein belongs to the protein kinase superfamily. AGC Ser/Thr protein kinase family. GPRK subfamily. Interacts with ST13 (via the C-terminus 303-319 AA). Interacts with TP53/p53. Interacts with HTR4 (via C-terminus 330-346 AA); this interaction is promoted by 5-HT (serotonin). Interacts with HDAC5. Interacts with GIT1. Autophosphorylated. Autophosphorylation may play a critical role in the regulation of GRK5 kinase activity. As to expression, highest levels in lung, heart, retina, lingual epithelium. Very little in brain, liver, kidney.

The protein resides in the cytoplasm. The protein localises to the nucleus. Its subcellular location is the cell membrane. It catalyses the reaction [G-protein-coupled receptor] + ATP = [G-protein-coupled receptor]-phosphate + ADP + H(+). Its activity is regulated as follows. Inhibited by calmodulin with an IC(50) of 50 nM. Calmodulin inhibits GRK5 association with receptor and phospholipid. In terms of biological role, serine/threonine kinase that phosphorylates preferentially the activated forms of a variety of G-protein-coupled receptors (GPCRs). Such receptor phosphorylation initiates beta-arrestin-mediated receptor desensitization, internalization, and signaling events leading to their down-regulation. Phosphorylates a variety of GPCRs, including adrenergic receptors (Beta-2 adrenergic receptor), muscarinic acetylcholine receptors (more specifically Gi-coupled M2/M4 subtypes), dopamine receptors and opioid receptors. In addition to GPCRs, also phosphorylates various substrates: Hsc70-interacting protein/ST13, TP53/p53, HDAC5, and arrestin-1/ARRB1. Phosphorylation of ARRB1 by GRK5 inhibits G-protein independent MAPK1/MAPK3 signaling downstream of 5HT4-receptors. Phosphorylation of HDAC5, a repressor of myocyte enhancer factor 2 (MEF2) leading to nuclear export of HDAC5 and allowing MEF2-mediated transcription. Phosphorylation of TP53/p53, a crucial tumor suppressor, inhibits TP53/p53-mediated apoptosis. Phosphorylation of ST13 regulates internalization of the chemokine receptor. Phosphorylates rhodopsin (RHO) (in vitro) and a non G-protein-coupled receptor, LRP6 during Wnt signaling (in vitro). This is G protein-coupled receptor kinase 5 (GRK5) from Bos taurus (Bovine).